The primary structure comprises 385 residues: Actin-2 (385 aa).

This sequence belongs to the actin family. ARP1 subfamily.

The protein resides in the cytoplasm. It is found in the cytoskeleton. This is Actin-2 from Pneumocystis carinii.